A 224-amino-acid chain; its full sequence is Ribonuclease T (224 aa).

One can recognise an Exonuclease domain in the interval 32–206; that stretch reads VVVDVETGGF…YDTEKTAELF (175 aa). Mg(2+)-binding residues include aspartate 35, glutamate 37, histidine 193, and aspartate 198. Residue histidine 193 is the Proton donor/acceptor of the active site.

Belongs to the RNase T family. Homodimer. Mg(2+) is required as a cofactor.

Trims short 3' overhangs of a variety of RNA species, leaving a one or two nucleotide 3' overhang. Responsible for the end-turnover of tRNA: specifically removes the terminal AMP residue from uncharged tRNA (tRNA-C-C-A). Also appears to be involved in tRNA biosynthesis. This Pseudomonas paraeruginosa (strain DSM 24068 / PA7) (Pseudomonas aeruginosa (strain PA7)) protein is Ribonuclease T.